We begin with the raw amino-acid sequence, 205 residues long: MNDLEKKFYELPELPYPYDALEPHISREQLTIHHQKHHQAYVDGANALLRKLDEARESDTDVDIKAALKELSFHVGGYVLHLFFWGNMGPADECGGEPSGKLAEYIEKDFGSFERFRKEFSQAAISAEGSGWAVLTYCQRTDRLFIMQVEKHNVNVIPHFRILLVLDVWEHAYYIDYRNVRPDYVEAFWNIVNWKEVEKRFEDIL.

Fe cation-binding residues include H33, H81, D167, and H171.

Belongs to the iron/manganese superoxide dismutase family. As to quaternary structure, homotetramer. Requires Fe cation as cofactor.

The catalysed reaction is 2 superoxide + 2 H(+) = H2O2 + O2. Its function is as follows. Destroys superoxide anion radicals which are normally produced within the cells and which are toxic to biological systems. The protein is Superoxide dismutase [Fe] (sod) of Methanothermobacter thermautotrophicus (strain ATCC 29096 / DSM 1053 / JCM 10044 / NBRC 100330 / Delta H) (Methanobacterium thermoautotrophicum).